The following is a 225-amino-acid chain: PKHD-type hydroxylase YbiX (225 aa).

A Fe2OG dioxygenase domain is found at 78–177; it reads TLSTPLFNRY…RVASFMWIQS (100 aa). Residues His96, Asp98, and His158 each contribute to the Fe cation site. Arg168 is a binding site for 2-oxoglutarate.

Fe(2+) is required as a cofactor. L-ascorbate serves as cofactor.

In Escherichia coli (strain 55989 / EAEC), this protein is PKHD-type hydroxylase YbiX.